Consider the following 282-residue polypeptide: NADPH-dependent 7-cyano-7-deazaguanine reductase (282 aa).

Residue 88–90 participates in substrate binding; the sequence is IES. 90 to 91 lines the NADPH pocket; sequence SK. The active-site Thioimide intermediate is the C190. D197 (proton donor) is an active-site residue. Residue 229–230 participates in substrate binding; the sequence is HE. Residue 258–259 coordinates NADPH; the sequence is RG.

Belongs to the GTP cyclohydrolase I family. QueF type 2 subfamily. In terms of assembly, homodimer.

The protein localises to the cytoplasm. The enzyme catalyses 7-aminomethyl-7-carbaguanine + 2 NADP(+) = 7-cyano-7-deazaguanine + 2 NADPH + 3 H(+). The protein operates within tRNA modification; tRNA-queuosine biosynthesis. Catalyzes the NADPH-dependent reduction of 7-cyano-7-deazaguanine (preQ0) to 7-aminomethyl-7-deazaguanine (preQ1). In Escherichia coli O127:H6 (strain E2348/69 / EPEC), this protein is NADPH-dependent 7-cyano-7-deazaguanine reductase.